Reading from the N-terminus, the 419-residue chain is Synaptotagmin-1 (419 aa).

The Vesicular portion of the chain corresponds to 1–57; sequence MVSESHHEALAAPPVTTVATVLPSNATEPASPGEGKEDAFSKLKEKFMNELHKIPLP. N-linked (GlcNAc...) asparagine glycosylation is present at Asn-25. The chain crosses the membrane as a helical span at residues 58 to 80; that stretch reads PWALIAIAIVAVLLVLTCCFCIC. S-palmitoyl cysteine attachment occurs at residues Cys-75, Cys-76, Cys-78, Cys-80, and Cys-83. The Cytoplasmic portion of the chain corresponds to 81–419; sequence KKCLFKKKNK…EVDAMLAVKK (339 aa). The disordered stretch occupies residues 108 to 139; sequence KDLGKTMKDQDDDAETGLTDGEEKEEPKEEEK. Over residues 117–131 the composition is skewed to acidic residues; it reads QDDDAETGLTDGEEK. Thr-126 is subject to Phosphothreonine. Residues 133–379 form a phospholipid binding region; sequence EPKEEEKLGK…AIGKVFVGYN (247 aa). One can recognise a C2 1 domain in the interval 139–258; the sequence is KLGKLQYSLD…DFGHVTEEWR (120 aa). 3 residues coordinate Ca(2+): Leu-169, Asp-170, and Asp-176. At Tyr-227 the chain carries Phosphotyrosine. Residues Asp-228, Phe-229, Asp-230, Ser-233, Lys-234, and Asp-236 each coordinate Ca(2+). Ser-262 is modified (phosphoserine). Positions 270–403 constitute a C2 2 domain; that stretch reads KLGDICFSLR…NPRRPIAQWH (134 aa). Asp-301 and Asp-307 together coordinate Ca(2+). 2 positions are modified to phosphoserine: Ser-340 and Ser-342. 3 residues coordinate Ca(2+): Asp-361, Asp-363, and Asp-369.

The protein belongs to the synaptotagmin family. Homotetramer. Heterodimer; heterodimerizes with SYT2 in presence of calcium. Interacts with SCAMP5. Interacts with STON2. Forms a complex with SV2B, syntaxin 1 and SNAP25. Interacts with SV2A, SV2B and SV2C. Interacts with RIMS1. Interacts with PRRT2. Interacts with DNAJC5 in a phosphorylation-dependent manner. Interacts (via N-terminus) with RAB3A. Interacts with SYT12. Interacts with calmodulin. Interacts with DNM1 (via C-terminal proline-rich domain (PRD)); this interaction facilitates vesicle fission during clathrin-mediated endocytosis (CME). The cofactor is Ca(2+). Post-translationally, glycosylated.

Its subcellular location is the cytoplasmic vesicle. It is found in the secretory vesicle membrane. The protein localises to the secretory vesicle. The protein resides in the synaptic vesicle membrane. It localises to the chromaffin granule membrane. Its subcellular location is the cytoplasm. In terms of biological role, calcium sensor that participates in triggering neurotransmitter release at the synapse. May have a regulatory role in the membrane interactions during trafficking of synaptic vesicles at the active zone of the synapse. It binds acidic phospholipids with a specificity that requires the presence of both an acidic head group and a diacyl backbone. A Ca(2+)-dependent interaction between synaptotagmin and putative receptors for activated protein kinase C has also been reported. It can bind to at least three additional proteins in a Ca(2+)-independent manner; these are neurexins, syntaxin and AP2. Plays a role in dendrite formation by melanocytes. The chain is Synaptotagmin-1 from Macaca fascicularis (Crab-eating macaque).